Consider the following 322-residue polypeptide: HPr kinase/phosphorylase (322 aa).

Active-site residues include histidine 153 and lysine 174. 168-175 provides a ligand contact to ATP; it reads GRSGLGKS. Serine 175 is a Mg(2+) binding site. Aspartate 192 (proton acceptor; for phosphorylation activity. Proton donor; for dephosphorylation activity) is an active-site residue. The interval 217 to 226 is important for the catalytic mechanism of both phosphorylation and dephosphorylation; sequence MEIRGLGVVD. Glutamate 218 is a binding site for Mg(2+). The active site involves arginine 259. Residues 280–285 form an important for the catalytic mechanism of dephosphorylation region; it reads PIFPGK.

It belongs to the HPrK/P family. In terms of assembly, homohexamer. Mg(2+) serves as cofactor.

The enzyme catalyses [HPr protein]-L-serine + ATP = [HPr protein]-O-phospho-L-serine + ADP + H(+). It carries out the reaction [HPr protein]-O-phospho-L-serine + phosphate + H(+) = [HPr protein]-L-serine + diphosphate. Functionally, catalyzes the ATP- as well as the pyrophosphate-dependent phosphorylation of a specific serine residue in HPr, a phosphocarrier protein of the phosphoenolpyruvate-dependent sugar phosphotransferase system (PTS). HprK/P also catalyzes the pyrophosphate-producing, inorganic phosphate-dependent dephosphorylation (phosphorolysis) of seryl-phosphorylated HPr (P-Ser-HPr). The sequence is that of HPr kinase/phosphorylase from Chlorobium phaeobacteroides (strain DSM 266 / SMG 266 / 2430).